The sequence spans 355 residues: Peptide chain release factor 1 (355 aa).

Q233 is modified (N5-methylglutamine). Residues 280-310 (ERRKKEQKRANNRRGQVGSGDRSERIRTYNF) form a disordered region.

Belongs to the prokaryotic/mitochondrial release factor family. Post-translationally, methylated by PrmC. Methylation increases the termination efficiency of RF1.

It is found in the cytoplasm. Functionally, peptide chain release factor 1 directs the termination of translation in response to the peptide chain termination codons UAG and UAA. The sequence is that of Peptide chain release factor 1 from Rickettsia canadensis (strain McKiel).